The chain runs to 457 residues: Argininosuccinate lyase (457 aa).

The protein belongs to the lyase 1 family. Argininosuccinate lyase subfamily.

The protein resides in the cytoplasm. The enzyme catalyses 2-(N(omega)-L-arginino)succinate = fumarate + L-arginine. It participates in amino-acid biosynthesis; L-arginine biosynthesis; L-arginine from L-ornithine and carbamoyl phosphate: step 3/3. This Escherichia coli O157:H7 protein is Argininosuccinate lyase.